The primary structure comprises 381 residues: MSKRDFYEVLGVSRDASERDIKKAYKRLAMKFHPDRNQGDESAADKFKEVKEAYEVLTDSQKKAAYDQYGHAAFEQGGGGFGGGFGGGGADFGDIFGDVFGDIFGGGRRGGGGHRAQRGADLRYNMELTLEEAVRGVTKEIEVPTLVHCDSCDGSGAKKGSSAETCGTCHGHGQVQMRQGFFAVQQTCPTCHGKGKIIKDPCNECHGQGRKQKTKTLNVKIPAGVDTGDRIRLSGEGEAGEMGAPSGDLYVQVHVKEHHIFERDGNNLYCEVPVSFAMAALGGEVEVPTLDGRVSLKVPSETQTGRMFRMRGKGVKGVRGGGIGDLIVKLVVETPVNLSSRQKELLKEFEESCGGEAATKHKPKSEGFFNGVKKFFDDLTS.

The region spanning 5-70 (DFYEVLGVSR…QKKAAYDQYG (66 aa)) is the J domain. A CR-type zinc finger spans residues 136–214 (GVTKEIEVPT…CHGQGRKQKT (79 aa)). Positions 149, 152, 166, 169, 188, 191, 202, and 205 each coordinate Zn(2+). 4 CXXCXGXG motif repeats span residues 149–156 (CDSCDGSG), 166–173 (CGTCHGHG), 188–195 (CPTCHGKG), and 202–209 (CNECHGQG).

It belongs to the DnaJ family. Homodimer. The cofactor is Zn(2+).

It is found in the cytoplasm. Participates actively in the response to hyperosmotic and heat shock by preventing the aggregation of stress-denatured proteins and by disaggregating proteins, also in an autonomous, DnaK-independent fashion. Unfolded proteins bind initially to DnaJ; upon interaction with the DnaJ-bound protein, DnaK hydrolyzes its bound ATP, resulting in the formation of a stable complex. GrpE releases ADP from DnaK; ATP binding to DnaK triggers the release of the substrate protein, thus completing the reaction cycle. Several rounds of ATP-dependent interactions between DnaJ, DnaK and GrpE are required for fully efficient folding. Also involved, together with DnaK and GrpE, in the DNA replication of plasmids through activation of initiation proteins. This Vibrio parahaemolyticus serotype O3:K6 (strain RIMD 2210633) protein is Chaperone protein DnaJ.